The chain runs to 372 residues: Fatty acid 2-hydroxylase (372 aa).

In terms of domain architecture, Cytochrome b5 heme-binding spans 8–86; the sequence is AASFTPAEVQ…LEQYYVGELR (79 aa). Residues H43 and H69 each coordinate heme. The next 2 membrane-spanning stretches (helical) occupy residues 168-188 and 213-233; these read VWYSVPIIWVPLVLYLSWSYY and SVFIGLFVLGMLFWTFVEYVI. The Fatty acid hydroxylase domain occupies 219-361; it reads FVLGMLFWTF…TKLWDYFFHT (143 aa). H234, H239, H257, H260, and H261 together coordinate Zn(2+). The next 2 membrane-spanning stretches (helical) occupy residues 268–288 and 290–310; these read SRLVFPPVPASLVIAFFYVFL and LILPETVGGIIFAGGLLGYVL. Zn(2+) contacts are provided by H315, H319, H336, H339, and H340.

The protein belongs to the sterol desaturase family. SCS7 subfamily. The cofactor is Zn(2+). Expressed in brain (at protein level). Detected in cerebellum and forebrain. Expression in the white matter is mainly restricted in oligodendrocytes. Expressed in stomach, kidney, skin and testis. Expressed in sebaceous gland.

Its subcellular location is the endoplasmic reticulum membrane. It localises to the microsome membrane. The enzyme catalyses a 1,2-saturated fatty acid + 2 Fe(II)-[cytochrome b5] + O2 + 2 H(+) = a (R)-2-hydroxy fatty acid + 2 Fe(III)-[cytochrome b5] + H2O. It catalyses the reaction hexadecanoate + 2 Fe(II)-[cytochrome b5] + O2 + 2 H(+) = (R)-2-hydroxyhexadecanoate + 2 Fe(III)-[cytochrome b5] + H2O. It carries out the reaction octadecanoate + 2 Fe(II)-[cytochrome b5] + O2 + 2 H(+) = (R)-2-hydroxyoctadecanoate + 2 Fe(III)-[cytochrome b5] + H2O. The catalysed reaction is docosanoate + 2 Fe(II)-[cytochrome b5] + O2 + 2 H(+) = 2-hydroxydocosanoate + 2 Fe(III)-[cytochrome b5] + H2O. The enzyme catalyses tetracosanoate + 2 Fe(II)-[cytochrome b5] + O2 + 2 H(+) = (R)-2-hydroxytetracosanoate + 2 Fe(III)-[cytochrome b5] + H2O. It participates in sphingolipid metabolism; galactosylceramide biosynthesis. Its pathway is lipid metabolism; fatty acid metabolism. Catalyzes the hydroxylation of free fatty acids at the C-2 position to produce 2-hydroxy fatty acids, which are building blocks of sphingolipids and glycosphingolipids common in neural tissue and epidermis. FA2H is stereospecific for the production of (R)-2-hydroxy fatty acids. Plays an essential role in the synthesis of galactosphingolipids of the myelin sheath. Responsible for the synthesis of sphingolipids and glycosphingolipids involved in the formation of epidermal lamellar bodies critical for skin permeability barrier. Participates in the synthesis of glycosphingolipids and a fraction of type II wax diesters in sebaceous gland, specifically regulating hair follicle homeostasis. Involved in the synthesis of sphingolipids of plasma membrane rafts, controlling lipid raft mobility and trafficking of raft-associated proteins. The protein is Fatty acid 2-hydroxylase of Mus musculus (Mouse).